The primary structure comprises 228 residues: uncharacterized protein (228 aa).

Belongs to the HAD-like hydrolase superfamily.

Its subcellular location is the cytoplasm. It localises to the nucleus. This is an uncharacterized protein from Schizosaccharomyces pombe (strain 972 / ATCC 24843) (Fission yeast).